Here is a 183-residue protein sequence, read N- to C-terminus: SsrA-binding protein (183 aa).

Positions 1-27 (MAKKATLVDHGAAKGKKKAQSKVSKKN) are disordered. Over residues 13–27 (AKGKKKAQSKVSKKN) the composition is skewed to basic residues.

The protein belongs to the SmpB family.

It localises to the cytoplasm. Required for rescue of stalled ribosomes mediated by trans-translation. Binds to transfer-messenger RNA (tmRNA), required for stable association of tmRNA with ribosomes. tmRNA and SmpB together mimic tRNA shape, replacing the anticodon stem-loop with SmpB. tmRNA is encoded by the ssrA gene; the 2 termini fold to resemble tRNA(Ala) and it encodes a 'tag peptide', a short internal open reading frame. During trans-translation Ala-aminoacylated tmRNA acts like a tRNA, entering the A-site of stalled ribosomes, displacing the stalled mRNA. The ribosome then switches to translate the ORF on the tmRNA; the nascent peptide is terminated with the 'tag peptide' encoded by the tmRNA and targeted for degradation. The ribosome is freed to recommence translation, which seems to be the essential function of trans-translation. The chain is SsrA-binding protein from Corynebacterium kroppenstedtii (strain DSM 44385 / JCM 11950 / CIP 105744 / CCUG 35717).